The sequence spans 296 residues: MLAPLPDVSLTDPAPSLSPLQWVGMQGIDLPVTVAEPGYWRELHARADVQVDLPAAHVKGIHMSRLYRQLDSLAEESALSALALRHALQAMIDSHLDCQSRSARMRLSLDLLAQRPALVTHDLSGWKSYPVRLDATLAQGVFQLRLQVGVGYSSTCPCSAALSRQLLEQGFLQAFAGEPLVEPDQVASWLRRHGTLATAHSQRSEAQVSVDLACDAPDLGILPLIARVEQALGTPVQTAVKRADEQAFAALNGRNLMFVEDAARRIQAALEGIYARPRVHVRHMESLHPHDAVAWA.

It belongs to the GTP cyclohydrolase IV family.

It catalyses the reaction GTP + H2O = 7,8-dihydroneopterin 3'-triphosphate + formate + H(+). Its pathway is cofactor biosynthesis; 7,8-dihydroneopterin triphosphate biosynthesis; 7,8-dihydroneopterin triphosphate from GTP: step 1/1. In terms of biological role, converts GTP to 7,8-dihydroneopterin triphosphate. The chain is GTP cyclohydrolase FolE2 from Delftia acidovorans (strain DSM 14801 / SPH-1).